The chain runs to 229 residues: Uracil-DNA glycosylase (229 aa).

The Proton acceptor role is filled by Asp-64.

This sequence belongs to the uracil-DNA glycosylase (UDG) superfamily. UNG family.

The protein resides in the cytoplasm. The catalysed reaction is Hydrolyzes single-stranded DNA or mismatched double-stranded DNA and polynucleotides, releasing free uracil.. Excises uracil residues from the DNA which can arise as a result of misincorporation of dUMP residues by DNA polymerase or due to deamination of cytosine. This chain is Uracil-DNA glycosylase, found in Salmonella arizonae (strain ATCC BAA-731 / CDC346-86 / RSK2980).